Consider the following 232-residue polypeptide: Large ribosomal subunit protein uL1 (232 aa).

This sequence belongs to the universal ribosomal protein uL1 family. Part of the 50S ribosomal subunit.

Binds directly to 23S rRNA. The L1 stalk is quite mobile in the ribosome, and is involved in E site tRNA release. In terms of biological role, protein L1 is also a translational repressor protein, it controls the translation of the L11 operon by binding to its mRNA. This is Large ribosomal subunit protein uL1 from Paraburkholderia xenovorans (strain LB400).